Here is a 1770-residue protein sequence, read N- to C-terminus: Vitellogenin (1770 aa).

Positions 1–16 are cleaved as a signal peptide; that stretch reads MLLLLTLLLFAGTVAA. Residues 22–809 form the Vitellogenin domain; sequence WQVGNEYTYL…SEDSVIPRIL (788 aa). A disulfide bridge connects residues Cys-178 and Cys-222. N-linked (GlcNAc...) asparagine glycosylation occurs at Asn-296. The segment at 373-394 is disordered; sequence SSSSSISSSEENDFWQPKPTLE. N-linked (GlcNAc...) asparagine glycosylation occurs at Asn-1067. The region spanning 1442–1635 is the VWFD domain; sequence TSCMLDKTRA…SYALISNQCE (194 aa). Cystine bridges form between Cys-1444/Cys-1598 and Cys-1466/Cys-1634.

In terms of tissue distribution, accumulates in the hemolymph. Represents up to 70% of the queen's hemolymph proteins. During the first week of the worker adult life, when it becomes a nurse bee and performs brood-rearing tasks, the vitellogenin titer increases and may account for up to 40% of the total hemolymph proteins.

The protein resides in the secreted. Its function is as follows. Precursor of the egg-yolk proteins that are sources of nutrients during embryonic development. Involved in the differentiation of honeybee larvae into queens. The sequence is that of Vitellogenin (Vg) from Apis mellifera (Honeybee).